A 430-amino-acid chain; its full sequence is CinA-like protein (430 aa).

This sequence belongs to the CinA family.

This Prochlorococcus marinus (strain NATL2A) protein is CinA-like protein.